The chain runs to 370 residues: Uroporphyrinogen decarboxylase (370 aa).

Substrate contacts are provided by residues 29 to 33 (RQAGR), Asp-79, Tyr-155, Ser-210, and His-342.

Belongs to the uroporphyrinogen decarboxylase family. In terms of assembly, homodimer.

Its subcellular location is the cytoplasm. It catalyses the reaction uroporphyrinogen III + 4 H(+) = coproporphyrinogen III + 4 CO2. Its pathway is porphyrin-containing compound metabolism; protoporphyrin-IX biosynthesis; coproporphyrinogen-III from 5-aminolevulinate: step 4/4. Catalyzes the decarboxylation of four acetate groups of uroporphyrinogen-III to yield coproporphyrinogen-III. This chain is Uroporphyrinogen decarboxylase, found in Acidovorax sp. (strain JS42).